A 209-amino-acid polypeptide reads, in one-letter code: Uracil phosphoribosyltransferase (209 aa).

Residues Arg-79, Arg-104, and 131–139 (DPMLATGGS) each bind 5-phospho-alpha-D-ribose 1-diphosphate. Uracil-binding positions include Ile-194 and 199 to 201 (GDA). Asp-200 is a 5-phospho-alpha-D-ribose 1-diphosphate binding site.

Belongs to the UPRTase family. It depends on Mg(2+) as a cofactor.

The catalysed reaction is UMP + diphosphate = 5-phospho-alpha-D-ribose 1-diphosphate + uracil. It functions in the pathway pyrimidine metabolism; UMP biosynthesis via salvage pathway; UMP from uracil: step 1/1. Allosterically activated by GTP. Catalyzes the conversion of uracil and 5-phospho-alpha-D-ribose 1-diphosphate (PRPP) to UMP and diphosphate. This chain is Uracil phosphoribosyltransferase, found in Streptococcus agalactiae serotype III (strain NEM316).